A 349-amino-acid polypeptide reads, in one-letter code: MTIGIVSYGAYVPRYRIKVEEIARVWGDDANALKSGLMVYEKSVPDIDEDAATIAVEAARYAMTRSGVDPERIGAVYTGSESHPYAVKPTSTIVSQAIGATPNMTAADFEFACKAGTAAVQACMGLVSSGMIDLGMAIGADVSQGAPGDALEYTAAAGGVACLIGKKESELAAIIEDTYSFTTDTPDFWRREGMPYPEHGGRFTGEPGYFKHVTNGAKGLLNKLGTKPEDYDYAVFHQPNGKFPTKAAKTLGFTKAQIAPGLVVPKIGNTYSGSCLMGIAATLDQAKPGDRIFATAFGSGAGSDAFSITVTDRIEEIRNRAPTVSELIKDPIYIDYARYAKHKGKIRRS.

2 residues coordinate (3S)-3-hydroxy-3-methylglutaryl-CoA: Asp29 and Ala30. Glu81 serves as the catalytic Proton donor/acceptor. (3S)-3-hydroxy-3-methylglutaryl-CoA is bound by residues Cys113 and Thr154. The active-site Acyl-thioester intermediate is Cys113. Arg202 is a CoA binding site. Residues Thr204 and His237 each contribute to the (3S)-3-hydroxy-3-methylglutaryl-CoA site. His237 functions as the Proton donor/acceptor in the catalytic mechanism. Position 242 (Lys242) interacts with CoA. (3S)-3-hydroxy-3-methylglutaryl-CoA contacts are provided by Lys246, Asn269, and Ser299.

The protein belongs to the thiolase-like superfamily. Archaeal HMG-CoA synthase family. In terms of assembly, interacts with acetoacetyl-CoA thiolase that catalyzes the precedent step in the pathway and with a DUF35 protein. The acetoacetyl-CoA thiolase/HMG-CoA synthase complex channels the intermediate via a fused CoA-binding site, which allows for efficient coupling of the endergonic thiolase reaction with the exergonic HMGCS reaction.

It catalyses the reaction acetoacetyl-CoA + acetyl-CoA + H2O = (3S)-3-hydroxy-3-methylglutaryl-CoA + CoA + H(+). It participates in metabolic intermediate biosynthesis; (R)-mevalonate biosynthesis; (R)-mevalonate from acetyl-CoA: step 2/3. Catalyzes the condensation of acetyl-CoA with acetoacetyl-CoA to form 3-hydroxy-3-methylglutaryl-CoA (HMG-CoA). Functions in the mevalonate (MVA) pathway leading to isopentenyl diphosphate (IPP), a key precursor for the biosynthesis of isoprenoid compounds that are building blocks of archaeal membrane lipids. This is Hydroxymethylglutaryl-CoA synthase from Methanosarcina barkeri (strain Fusaro / DSM 804).